Here is a 357-residue protein sequence, read N- to C-terminus: Dehydrogenase FUB6 (357 aa).

This sequence belongs to the zinc-containing alcohol dehydrogenase family. Quinone oxidoreductase subfamily.

It functions in the pathway mycotoxin biosynthesis. Its function is as follows. Dehydrogenase; part of the gene cluster that mediates the biosynthesis of fusaric acid, a mycotoxin with low to moderate toxicity to animals and humans, but with high phytotoxic properties. L-aspartate is suggested as fusaric acid amino acid precursor that is activated and further processed to O-acetyl-L-homoserine by cluster enzymes aspartate kinase FUB3 and homoserine O-acetyltransferase FUB5, as well as enzymes of the primary metabolism. The polyketide synthase (PKS) FUB1 generates the triketide trans-2-hexenal which is presumptively released by the hydrolase FUB4 and linked to the NRPS-bound amino acid precursor by NAD(P)-dependent dehydrogenase FUB6. FUB1, FUB4, and the non-canonical NRPS Fub8 may form an enzyme complex. Further processing of the NRPS-bound intermediate might be carried out by FUB6 and the O-acetylhomoserine FUB7, enabling a spontaneous electrocyclization to close the carbon backbone of fusaric acid. Dihydrofusaric acid is likely to be released via reduction by the thioester reductase (TR) domain of FUB8 whereupon the final oxidation to fusaric acid may (also) be performed by the FMN-dependent dehydrogenase FUB9. This chain is Dehydrogenase FUB6, found in Gibberella moniliformis (strain M3125 / FGSC 7600) (Maize ear and stalk rot fungus).